Here is a 261-residue protein sequence, read N- to C-terminus: 3-hydroxyacyl-CoA dehydrogenase type-2 (261 aa).

An N-acetylalanine modification is found at Ala2. Residues Ser20 and Asp41 each contribute to the NAD(+) site. Lys53 is modified (N6-acetyllysine; alternate). Residue Lys53 is modified to N6-succinyllysine; alternate. Val65 is an NAD(+) binding site. N6-acetyllysine is present on Lys69. An NAD(+)-binding site is contributed by Cys91. Lys99 and Lys105 each carry N6-acetyllysine. Lys107 is subject to N6-acetyllysine; alternate. Position 107 is an N6-succinyllysine; alternate (Lys107). Ser155 provides a ligand contact to substrate. The NAD(+) site is built by Tyr168, Lys172, Phe201, and Thr203. Catalysis depends on Tyr168, which acts as the Proton acceptor. At Lys212 the chain carries N6-acetyllysine; alternate. N6-succinyllysine; alternate is present on Lys212.

The protein belongs to the short-chain dehydrogenases/reductases (SDR) family. In terms of assembly, homotetramer. Component of mitochondrial ribonuclease P, a complex composed of TRMT10C/MRPP1, HSD17B10/MRPP2 and PRORP/MRPP3. Interacts with TRMT10C/MRPP1; forming the MRPP1-MRPP2 subcomplex of the mitochondrial ribonuclease P complex.

Its subcellular location is the mitochondrion. It localises to the mitochondrion matrix. The protein resides in the mitochondrion nucleoid. The catalysed reaction is a (3S)-3-hydroxyacyl-CoA + NAD(+) = a 3-oxoacyl-CoA + NADH + H(+). It catalyses the reaction (2S,3S)-3-hydroxy-2-methylbutanoyl-CoA + NAD(+) = 2-methyl-3-oxobutanoyl-CoA + NADH + H(+). The enzyme catalyses testosterone + NAD(+) = androst-4-ene-3,17-dione + NADH + H(+). It carries out the reaction 5alpha-androstane-3alpha,17beta-diol + NAD(+) = 17beta-hydroxy-5alpha-androstan-3-one + NADH + H(+). The catalysed reaction is 17beta-estradiol + NAD(+) = estrone + NADH + H(+). It catalyses the reaction cholate + NAD(+) = 3alpha,12alpha-dihydroxy-7-oxo-5beta-cholanate + NADH + H(+). The enzyme catalyses (3S)-3-hydroxybutanoyl-CoA + NAD(+) = acetoacetyl-CoA + NADH + H(+). It carries out the reaction (3S)-hydroxyoctanoyl-CoA + NAD(+) = 3-oxooctanoyl-CoA + NADH + H(+). The catalysed reaction is (3S)-hydroxyhexadecanoyl-CoA + NAD(+) = 3-oxohexadecanoyl-CoA + NADH + H(+). It catalyses the reaction 17beta-hydroxy-5alpha-androstan-3-one + NAD(+) = 5alpha-androstan-3,17-dione + NADH + H(+). The enzyme catalyses 5alpha-pregnan-20beta-ol-3-one + NAD(+) = 5alpha-pregnane-3,20-dione + NADH + H(+). It carries out the reaction 3alpha-hydroxy-5alpha-pregnan-20-one + NAD(+) = 5alpha-pregnane-3,20-dione + NADH + H(+). The catalysed reaction is cortisone + NAD(+) = 17alpha-hydroxypregn-4-en-3,11,20-trione-21-al + NADH + H(+). It catalyses the reaction 11-dehydrocorticosterone + NAD(+) = pregn-4-ene-3,11,20,21-tetraone + NADH + H(+). The enzyme catalyses cortisol + NAD(+) = 11beta,17alpha-dihydroxypregn-4-ene-3,20,21-trione + NADH + H(+). It carries out the reaction chenodeoxycholate + NAD(+) = 7-oxolithocholate + NADH + H(+). The catalysed reaction is ursodeoxycholate + NAD(+) = 7-oxolithocholate + NADH + H(+). It catalyses the reaction 3beta,7beta-dihydroxy-5beta-cholan-24-oate + NAD(+) = 3beta-hydroxy-7-oxo-5beta-cholan-24-oate + NADH + H(+). It participates in amino-acid degradation; L-isoleucine degradation. It functions in the pathway lipid metabolism; fatty acid beta-oxidation. The protein operates within steroid metabolism. Its pathway is lipid metabolism; bile acid biosynthesis. In terms of biological role, mitochondrial dehydrogenase involved in pathways of fatty acid, branched-chain amino acid and steroid metabolism. Acts as (S)-3-hydroxyacyl-CoA dehydrogenase in mitochondrial fatty acid beta-oxidation, a major degradation pathway of fatty acids. Catalyzes the third step in the beta-oxidation cycle, namely the reversible conversion of (S)-3-hydroxyacyl-CoA to 3-ketoacyl-CoA. Preferentially accepts straight medium- and short-chain acyl-CoA substrates with highest efficiency for (3S)-hydroxybutanoyl-CoA. Acts as 3-hydroxy-2-methylbutyryl-CoA dehydrogenase in branched-chain amino acid catabolic pathway. Catalyzes the oxidation of 3-hydroxy-2-methylbutanoyl-CoA into 2-methyl-3-oxobutanoyl-CoA, a step in isoleucine degradation pathway. Has hydroxysteroid dehydrogenase activity toward steroid hormones and bile acids. Catalyzes the oxidation of 3alpha-, 17beta-, 20beta- and 21-hydroxysteroids and 7alpha- and 7beta-hydroxy bile acids. Oxidizes allopregnanolone/brexanolone at the 3alpha-hydroxyl group, which is known to be critical for the activation of gamma-aminobutyric acid receptors (GABAARs) chloride channel. Has phospholipase C-like activity toward cardiolipin and its oxidized species. Likely oxidizes the 2'-hydroxyl in the head group of cardiolipin to form a ketone intermediate that undergoes nucleophilic attack by water and fragments into diacylglycerol, dihydroxyacetone and orthophosphate. Has higher affinity for cardiolipin with oxidized fatty acids and may degrade these species during the oxidative stress response to protect cells from apoptosis. By interacting with intracellular amyloid-beta, it may contribute to the neuronal dysfunction associated with Alzheimer disease (AD). Essential for structural and functional integrity of mitochondria. Its function is as follows. In addition to mitochondrial dehydrogenase activity, moonlights as a component of mitochondrial ribonuclease P, a complex that cleaves tRNA molecules in their 5'-ends. Together with TRMT10C/MRPP1, forms a subcomplex of the mitochondrial ribonuclease P, named MRPP1-MRPP2 subcomplex, which displays functions that are independent of the ribonuclease P activity. The MRPP1-MRPP2 subcomplex catalyzes the formation of N(1)-methylguanine and N(1)-methyladenine at position 9 (m1G9 and m1A9, respectively) in tRNAs; HSD17B10/MRPP2 acting as a non-catalytic subunit. The MRPP1-MRPP2 subcomplex also acts as a tRNA maturation platform: following 5'-end cleavage by the mitochondrial ribonuclease P complex, the MRPP1-MRPP2 subcomplex enhances the efficiency of 3'-processing catalyzed by ELAC2, retains the tRNA product after ELAC2 processing and presents the nascent tRNA to the mitochondrial CCA tRNA nucleotidyltransferase TRNT1 enzyme. Associates with mitochondrial DNA complexes at the nucleoids to initiate RNA processing and ribosome assembly. In Mus musculus (Mouse), this protein is 3-hydroxyacyl-CoA dehydrogenase type-2 (Hsd17b10).